Here is a 226-residue protein sequence, read N- to C-terminus: Urease accessory protein UreF (226 aa).

This sequence belongs to the UreF family. UreD, UreF and UreG form a complex that acts as a GTP-hydrolysis-dependent molecular chaperone, activating the urease apoprotein by helping to assemble the nickel containing metallocenter of UreC. The UreE protein probably delivers the nickel.

It localises to the cytoplasm. Required for maturation of urease via the functional incorporation of the urease nickel metallocenter. The polypeptide is Urease accessory protein UreF (Burkholderia cenocepacia (strain ATCC BAA-245 / DSM 16553 / LMG 16656 / NCTC 13227 / J2315 / CF5610) (Burkholderia cepacia (strain J2315))).